An 810-amino-acid polypeptide reads, in one-letter code: Hemoglobin-haptoglobin utilization protein B (810 aa).

The first 22 residues, 1-22 (MPIPFKPVLAVAAIAQAFPAFA), serve as a signal peptide directing secretion. The 133-residue stretch at 34 to 166 (NEITVTGTHK…LGGAVNYQTK (133 aa)) folds into the TBDR plug domain. The TBDR beta-barrel domain maps to 175-810 (DKPYHLGIKG…SYNFTIEAKF (636 aa)). The short motif at 793–810 (QRFTSPGRSYNFTIEAKF) is the TonB C-terminal box element.

Belongs to the TonB-dependent receptor family.

Its subcellular location is the cell outer membrane. Its function is as follows. Acts as a receptor for hemoglobin or the hemoglobin/haptoglobin complex and is required for heme uptake. The polypeptide is Hemoglobin-haptoglobin utilization protein B (hpuB) (Neisseria meningitidis serogroup C).